The sequence spans 986 residues: DNA polymerase I (986 aa).

The 5'-3' exonuclease domain occupies 1–303; the sequence is MFMSAKSPLL…RTFIDKIQAF (303 aa). The region spanning 304 to 592 is the 3'-5' exonuclease domain; it reads HRNFSDNQSP…MEDRGIRIDC (289 aa). The segment at 308-327 is disordered; sequence SDNQSPVPMGNEADNGEPKK. Residues 593-986 form a polymerase region; that stretch reads DYLQTLSQQL…HRGSNWMEAK (394 aa).

Belongs to the DNA polymerase type-A family. As to quaternary structure, single-chain monomer with multiple functions.

It carries out the reaction DNA(n) + a 2'-deoxyribonucleoside 5'-triphosphate = DNA(n+1) + diphosphate. Its function is as follows. In addition to polymerase activity, this DNA polymerase exhibits 3'-5' and 5'-3' exonuclease activity. The polypeptide is DNA polymerase I (polA) (Synechocystis sp. (strain ATCC 27184 / PCC 6803 / Kazusa)).